Reading from the N-terminus, the 505-residue chain is Trans-cinnamate 4-monooxygenase (505 aa).

A helical membrane pass occupies residues 3–23 (LLLVEKTLLALFAAIIASIFI). (E)-cinnamate-binding positions include 213–218 (RSRLAQ) and alanine 306. Residue cysteine 447 participates in heme binding.

The protein belongs to the cytochrome P450 family. Requires heme as cofactor.

It is found in the membrane. The catalysed reaction is (E)-cinnamate + reduced [NADPH--hemoprotein reductase] + O2 = (E)-4-coumarate + oxidized [NADPH--hemoprotein reductase] + H2O + H(+). Its pathway is phenylpropanoid metabolism; trans-4-coumarate biosynthesis; trans-4-coumarate from trans-cinnamate: step 1/1. Functionally, catalyzes the first oxidative step of the phenylpropanoid pathway in higher plants by transforming trans-cinnamate into p-coumarate. The compounds formed by this pathway are essential components for lignification, pollination, and defense against ultraviolet light, predators and pathogens. The polypeptide is Trans-cinnamate 4-monooxygenase (CYP73A12) (Zinnia elegans (Garden zinnia)).